The chain runs to 287 residues: Elongation factor Ts (287 aa).

Residues Thr-80–Leu-83 form an involved in Mg(2+) ion dislocation from EF-Tu region.

It belongs to the EF-Ts family.

The protein localises to the cytoplasm. Associates with the EF-Tu.GDP complex and induces the exchange of GDP to GTP. It remains bound to the aminoacyl-tRNA.EF-Tu.GTP complex up to the GTP hydrolysis stage on the ribosome. In Pseudomonas putida (strain GB-1), this protein is Elongation factor Ts.